Consider the following 44-residue polypeptide: Thioredoxin (44 aa).

The region spanning 2-44 (IELDKSNFEEEVLKAEGTVLVDFWSPSCEPCKALMPHVHDFEE) is the Thioredoxin domain. A disulfide bond links Cys-29 and Cys-32.

This sequence belongs to the thioredoxin family.

Its function is as follows. Participates in various redox reactions through the reversible oxidation of its active center dithiol to a disulfide and catalyzes dithiol-disulfide exchange reactions. This is Thioredoxin (trxA) from Tissierella creatinophila.